A 371-amino-acid polypeptide reads, in one-letter code: Aspartate-semialdehyde dehydrogenase (371 aa).

NADP(+) contacts are provided by residues 9–12, 37–38, and Q73; these read RGMV and TS. R102 serves as a coordination point for phosphate. Catalysis depends on C135, which acts as the Acyl-thioester intermediate. Q162 provides a ligand contact to substrate. NADP(+) is bound by residues 165-166 and P193; that span reads SG. E241 is a binding site for substrate. K244 contacts phosphate. R268 serves as a coordination point for substrate. H275 acts as the Proton acceptor in catalysis. Residue Q351 coordinates NADP(+).

Belongs to the aspartate-semialdehyde dehydrogenase family. As to quaternary structure, homodimer.

The catalysed reaction is L-aspartate 4-semialdehyde + phosphate + NADP(+) = 4-phospho-L-aspartate + NADPH + H(+). The protein operates within amino-acid biosynthesis; L-lysine biosynthesis via DAP pathway; (S)-tetrahydrodipicolinate from L-aspartate: step 2/4. It functions in the pathway amino-acid biosynthesis; L-methionine biosynthesis via de novo pathway; L-homoserine from L-aspartate: step 2/3. Its pathway is amino-acid biosynthesis; L-threonine biosynthesis; L-threonine from L-aspartate: step 2/5. Its function is as follows. Catalyzes the NADPH-dependent formation of L-aspartate-semialdehyde (L-ASA) by the reductive dephosphorylation of L-aspartyl-4-phosphate. The protein is Aspartate-semialdehyde dehydrogenase of Neisseria meningitidis serogroup B (strain ATCC BAA-335 / MC58).